The chain runs to 368 residues: tRNA N6-adenosine threonylcarbamoyltransferase (368 aa).

Fe cation is bound by residues His-108 and His-112. Substrate is bound by residues 149-153 (LVSGG), Asp-183, Gly-196, Asp-200, and Asn-301. Asp-329 contacts Fe cation.

It belongs to the KAE1 / TsaD family. It depends on Fe(2+) as a cofactor.

The protein localises to the cytoplasm. It carries out the reaction L-threonylcarbamoyladenylate + adenosine(37) in tRNA = N(6)-L-threonylcarbamoyladenosine(37) in tRNA + AMP + H(+). Functionally, required for the formation of a threonylcarbamoyl group on adenosine at position 37 (t(6)A37) in tRNAs that read codons beginning with adenine. Is involved in the transfer of the threonylcarbamoyl moiety of threonylcarbamoyl-AMP (TC-AMP) to the N6 group of A37, together with TsaE and TsaB. TsaD likely plays a direct catalytic role in this reaction. The sequence is that of tRNA N6-adenosine threonylcarbamoyltransferase from Paenarthrobacter aurescens (strain TC1).